We begin with the raw amino-acid sequence, 317 residues long: Ribose-phosphate pyrophosphokinase (317 aa).

ATP is bound by residues 43–45 (DGE) and 102–103 (RQ). Mg(2+) is bound by residues H136 and D175. Residue K198 is part of the active site. D-ribose 5-phosphate is bound by residues R200, D224, and 228-232 (DTAGT).

Belongs to the ribose-phosphate pyrophosphokinase family. Class I subfamily. As to quaternary structure, homohexamer. Mg(2+) serves as cofactor.

It localises to the cytoplasm. The enzyme catalyses D-ribose 5-phosphate + ATP = 5-phospho-alpha-D-ribose 1-diphosphate + AMP + H(+). Its pathway is metabolic intermediate biosynthesis; 5-phospho-alpha-D-ribose 1-diphosphate biosynthesis; 5-phospho-alpha-D-ribose 1-diphosphate from D-ribose 5-phosphate (route I): step 1/1. Its function is as follows. Involved in the biosynthesis of the central metabolite phospho-alpha-D-ribosyl-1-pyrophosphate (PRPP) via the transfer of pyrophosphoryl group from ATP to 1-hydroxyl of ribose-5-phosphate (Rib-5-P). This Bacillus anthracis protein is Ribose-phosphate pyrophosphokinase.